Reading from the N-terminus, the 490-residue chain is Homoserine O-acetyltransferase (490 aa).

One can recognise an AB hydrolase-1 domain in the interval 47 to 353 (NAILVCHALT…SQFGHDAFLI (307 aa)). Serine 152 functions as the Nucleophile in the catalytic mechanism. Arginine 221 contributes to the substrate binding site. Residues aspartate 315 and histidine 348 contribute to the active site. Residue aspartate 349 participates in substrate binding. CBS domains lie at 375–432 (MNTQ…YTSL) and 436–490 (MSSQ…GRGP).

This sequence belongs to the AB hydrolase superfamily. MetX family. As to quaternary structure, homodimer.

It is found in the cytoplasm. The enzyme catalyses L-homoserine + acetyl-CoA = O-acetyl-L-homoserine + CoA. It participates in amino-acid biosynthesis; L-methionine biosynthesis via de novo pathway; O-acetyl-L-homoserine from L-homoserine: step 1/1. In terms of biological role, transfers an acetyl group from acetyl-CoA to L-homoserine, forming acetyl-L-homoserine. The protein is Homoserine O-acetyltransferase of Methanosphaerula palustris (strain ATCC BAA-1556 / DSM 19958 / E1-9c).